The sequence spans 500 residues: NAD(P)H-quinone oxidoreductase chain 4, chloroplastic (500 aa).

Transmembrane regions (helical) follow at residues 4–24 (FPWLTIIVVLPISAGSLIFFL), 37–57 (ICICVLELLLTTYAFCYHFQL), 87–107 (IGPILLTGFITTLATLAAWPV), 113–130 (LFHFLMLAMYSGQIGSFS), 134–154 (LLLFFLMWELELIPVYLLLSM), 167–187 (FILYTAGGSIFLLIGVLGIGL), 207–227 (IALEIIFYIGFLIAFAVKSPI), 242–262 (HYSTCMLLAGILLKMGAYGLV), 272–292 (AHSLFSPWLVVVGTMQIIYAA), 305–325 (IAYSSVSHMGFIIIGIGSITD), 330–350 (GAILQIVSHGFIGAALFFLAG), 386–406 (LALPGMSGFVAELIVFFGIIT), 411–431 (FLMAKILITFVMAIGMILTPI), and 462–482 (LFVSISILLPVIGIGIYPDFL).

It belongs to the complex I subunit 4 family.

It is found in the plastid. The protein localises to the chloroplast thylakoid membrane. It carries out the reaction a plastoquinone + NADH + (n+1) H(+)(in) = a plastoquinol + NAD(+) + n H(+)(out). The enzyme catalyses a plastoquinone + NADPH + (n+1) H(+)(in) = a plastoquinol + NADP(+) + n H(+)(out). This Carica papaya (Papaya) protein is NAD(P)H-quinone oxidoreductase chain 4, chloroplastic.